We begin with the raw amino-acid sequence, 546 residues long: Chaperonin GroEL 1 (546 aa).

Residues 30–33 (TLGP), Lys-51, 87–91 (DGTTT), Gly-415, 479–481 (NAA), and Asp-495 contribute to the ATP site. The tract at residues 526-546 (KEDAPMPGGMPGGMGGMGMDM) is disordered. Gly residues predominate over residues 534–546 (GMPGGMGGMGMDM).

It belongs to the chaperonin (HSP60) family. In terms of assembly, forms a cylinder of 14 subunits composed of two heptameric rings stacked back-to-back. Interacts with the co-chaperonin GroES.

It localises to the cytoplasm. It catalyses the reaction ATP + H2O + a folded polypeptide = ADP + phosphate + an unfolded polypeptide.. Together with its co-chaperonin GroES, plays an essential role in assisting protein folding. The GroEL-GroES system forms a nano-cage that allows encapsulation of the non-native substrate proteins and provides a physical environment optimized to promote and accelerate protein folding. This Burkholderia pseudomallei (strain K96243) protein is Chaperonin GroEL 1.